We begin with the raw amino-acid sequence, 57 residues long: Granulin-1 (57 aa).

2 disulfide bridges follow: C4-C16 and C10-C26.

Belongs to the granulin family. Granulins are disulfide bridged. In terms of tissue distribution, ubiquitous.

It localises to the secreted. Its function is as follows. Granulins have possible cytokine-like activity. They may play a role in inflammation, wound repair, and tissue remodeling. This chain is Granulin-1, found in Cyprinus carpio (Common carp).